The following is a 484-amino-acid chain: MKYSANLTALLQTDTVLVAVFEDGSLSPSAQQFDGQGEVSALLKSGDISGKIGEIATFRRQNQRIIVVGAGKPNDINERQFKQITQKAFQAVKPTSAQTLANALTEVQINGRDLYWNIRFGLETIAAESYIFDEFKSKKADPVKLRNVIFHADDKQAQLAVQHGSAIALGVKLARDIANCPPNVCNPNYLAAQAKKLEKQTALLTTAVLGEKEMAELGMHAYLGVSQGSKNEAQLSVMTYKNHPDPHAKPIVLVGKGLTFDAGGISLKPSADMDEMKYDMCGAASIFGVMNALVELQLPLNVIGVMAGCENLPDGNAYRPGDILTTMNGLTVEVLNTDAEGRLVLCDTLTYVERFEPECVVDVATLTGACVVALGQHNSGLISTNDELAEQLFRASQQTQDKAWRLPLSDEYQEQLKSPFADLANIGGRWGGAITAGAFLSNFTKQYRWAHLDIAGTAWLQGANKGATGRPVSLLTQFLINQCQ.

The Mn(2+) site is built by Lys-256 and Asp-261. Lys-268 is an active-site residue. The Mn(2+) site is built by Asp-279, Asp-338, and Glu-340. The active site involves Arg-342.

It belongs to the peptidase M17 family. It depends on Mn(2+) as a cofactor.

The protein resides in the cytoplasm. It carries out the reaction Release of an N-terminal amino acid, Xaa-|-Yaa-, in which Xaa is preferably Leu, but may be other amino acids including Pro although not Arg or Lys, and Yaa may be Pro. Amino acid amides and methyl esters are also readily hydrolyzed, but rates on arylamides are exceedingly low.. The enzyme catalyses Release of an N-terminal amino acid, preferentially leucine, but not glutamic or aspartic acids.. Presumably involved in the processing and regular turnover of intracellular proteins. Catalyzes the removal of unsubstituted N-terminal amino acids from various peptides. In Actinobacillus succinogenes (strain ATCC 55618 / DSM 22257 / CCUG 43843 / 130Z), this protein is Probable cytosol aminopeptidase.